A 255-amino-acid chain; its full sequence is tRNA (adenine(58)-N(1))-methyltransferase TrmI (255 aa).

S-adenosyl-L-methionine is bound by residues 104–107 (SGGL), E125, H130, E155, and D170.

The protein belongs to the class I-like SAM-binding methyltransferase superfamily. TRM61 family. Homotetramer composed of a dimer of dimers.

The catalysed reaction is adenosine(58) in tRNA + S-adenosyl-L-methionine = N(1)-methyladenosine(58) in tRNA + S-adenosyl-L-homocysteine + H(+). Functionally, catalyzes the S-adenosyl-L-methionine-dependent formation of N(1)-methyladenine at position 58 (m1A58) in tRNA. Is required for cell growth at extreme temperatures. The sequence is that of tRNA (adenine(58)-N(1))-methyltransferase TrmI (trmI) from Thermus thermophilus (strain ATCC BAA-163 / DSM 7039 / HB27).